Consider the following 223-residue polypeptide: Cytidylate kinase (223 aa).

17–25 (GPTASGKGT) contributes to the ATP binding site.

The protein belongs to the cytidylate kinase family. Type 1 subfamily.

The protein resides in the cytoplasm. The catalysed reaction is CMP + ATP = CDP + ADP. The enzyme catalyses dCMP + ATP = dCDP + ADP. The chain is Cytidylate kinase from Bordetella bronchiseptica (strain ATCC BAA-588 / NCTC 13252 / RB50) (Alcaligenes bronchisepticus).